Consider the following 121-residue polypeptide: MNAVLSVQGASAPVKKKSFFSKFTRLNMLRLARAVIPAAVLMMFFPQLAMAAGSSGQDLMASGNTTVKATFGKDSSVVKWVVLAEVLVGAVMYMMTKNVKFLAGFAIISVFIAVGMAVVGL.

Positions 1–51 (MNAVLSVQGASAPVKKKSFFSKFTRLNMLRLARAVIPAAVLMMFFPQLAMA) are cleaved as a propeptide — leader peptide; cleaved by LepB. The Periplasmic segment spans residues 1–75 (MNAVLSVQGA…TVKATFGKDS (75 aa)). Alanine 52 is subject to N-acetylalanine. Residues 76–96 (SVVKWVVLAEVLVGAVMYMMT) traverse the membrane as a helical segment. At 97–100 (KNVK) the chain is on the cytoplasmic side. A helical membrane pass occupies residues 101 to 121 (FLAGFAIISVFIAVGMAVVGL).

The protein belongs to the TraA family. In terms of assembly, monomer. Interacts with itself to form filaments; also interacts with TraQ.

The protein resides in the cell inner membrane. It is found in the secreted. Functionally, propilin is the precursor of the pilus subunit, pilin, that forms conjugative pili, the filamentous surface appendages required for cell-to-cell contact during the earlier stages of bacterial conjugation, and that retract after contact is established. Mature pilin is assembled with the help of TraQ and TraX. Functions as a receptor for CdiA-CT from E.cloacae and E.coli, although it is not clear if this is physiologically relevant. This Escherichia coli (strain K12) protein is Pilin (traA).